A 410-amino-acid chain; its full sequence is Lissencephaly-1 homolog (410 aa).

Residues 7–39 (QQEELQLAVHAYLVEAGHAEAAAAMAKSANLGD) enclose the LisH domain. The stretch at 55–80 (TTITRLQKRNMELQAEVEELRSSARA) forms a coiled coil. 7 WD repeats span residues 104–143 (GHRL…FERS), 146–185 (GHTN…CTKT), 188–227 (GHDH…CLQT), 230–269 (GHSD…CKHV), 294–333 (MIFG…HLAR), 336–375 (GHDN…VSKT), and 378–410 (AHNH…WECN).

Belongs to the WD repeat LIS1/nudF family.

The protein localises to the cytoplasm. It is found in the cytoskeleton. Its subcellular location is the microtubule organizing center. The protein resides in the centrosome. In terms of biological role, positively regulates the activity of the minus-end directed microtubule motor protein dynein. May enhance dynein-mediated microtubule sliding by targeting dynein to the microtubule plus end. Required for several dynein- and microtubule-dependent processes. The protein is Lissencephaly-1 homolog of Monosiga brevicollis (Choanoflagellate).